The chain runs to 419 residues: Inositol-tetrakisphosphate 1-kinase (419 aa).

Lys-18 contributes to the 1D-myo-inositol 1,3,4-trisphosphate binding site. ATP is bound by residues Arg-106 and Lys-157. The ATP-grasp domain maps to 117–334 (EAYMKDDRIC…TGGAATEEVA (218 aa)). Residues His-167 and Lys-199 each coordinate 1D-myo-inositol 1,3,4-trisphosphate. ATP contacts are provided by residues 188–199 (QNFINHNAVLYK), Ser-214, Ser-232, and Ser-236. The Mg(2+) site is built by Asp-281, Asp-295, and Asn-297. Position 297 (Asn-297) interacts with 1D-myo-inositol 1,3,4-trisphosphate. Lys-388 is modified (N6-acetyllysine; by EP300 and CREBBP). The residue at position 401 (Ser-401) is a Phosphoserine. An N6-acetyllysine; by EP300 and CREBBP modification is found at Lys-415.

It belongs to the ITPK1 family. As to quaternary structure, monomer. Interacts with GPS1/COPS1. It depends on Mg(2+) as a cofactor. In terms of processing, acetylation by EP300 and CREBBP destabilizes ITPK1, and down-regulates enzymatic activity. Deacetylated by SIRT1.

It catalyses the reaction 1D-myo-inositol 3,4,5,6-tetrakisphosphate + ATP = 1D-myo-inositol 1,3,4,5,6-pentakisphosphate + ADP + H(+). The catalysed reaction is 1D-myo-inositol 1,3,4-trisphosphate + ATP = 1D-myo-inositol 1,3,4,5-tetrakisphosphate + ADP + H(+). It carries out the reaction 1D-myo-inositol 1,3,4-trisphosphate + ATP = 1D-myo-inositol 1,3,4,6-tetrakisphosphate + ADP + H(+). The enzyme catalyses 1D-myo-inositol 3,4,6-trisphosphate + ATP = 1D-myo-inositol 1,3,4,6-tetrakisphosphate + ADP + H(+). It catalyses the reaction 1D-myo-inositol 1,3,4-trisphosphate + 1D-myo-inositol 1,3,4,5,6-pentakisphosphate = 1D-myo-inositol 3,4,5,6-tetrakisphosphate + 1D-myo-inositol 1,3,4,6-tetrakisphosphate. The catalysed reaction is 1D-myo-inositol 1,3,4-trisphosphate + 1D-myo-inositol 1,3,4,5,6-pentakisphosphate = 1D-myo-inositol 3,4,5,6-tetrakisphosphate + 1D-myo-inositol 1,3,4,5-tetrakisphosphate. In terms of biological role, kinase that can phosphorylate various inositol polyphosphate such as Ins(3,4,5,6)P4 or Ins(1,3,4)P3. Phosphorylates Ins(3,4,5,6)P4 at position 1 to form Ins(1,3,4,5,6)P5. This reaction is thought to have regulatory importance, since Ins(3,4,5,6)P4 is an inhibitor of plasma membrane Ca(2+)-activated Cl(-) channels, while Ins(1,3,4,5,6)P5 is not. Also phosphorylates Ins(1,3,4)P3 on O-5 and O-6 to form Ins(1,3,4,6)P4, an essential molecule in the hexakisphosphate (InsP6) pathway. Also acts as an inositol polyphosphate phosphatase that dephosphorylates Ins(1,3,4,5)P4 and Ins(1,3,4,6)P4 to Ins(1,3,4)P3, and Ins(1,3,4,5,6)P5 to Ins(3,4,5,6)P4. May also act as an isomerase that interconverts the inositol tetrakisphosphate isomers Ins(1,3,4,5)P4 and Ins(1,3,4,6)P4 in the presence of ADP and magnesium. Probably acts as the rate-limiting enzyme of the InsP6 pathway. Modifies TNF-alpha-induced apoptosis by interfering with the activation of TNFRSF1A-associated death domain. Plays an important role in MLKL-mediated necroptosis. Produces highly phosphorylated inositol phosphates such as inositolhexakisphosphate (InsP6) which bind to MLKL mediating the release of an N-terminal auto-inhibitory region leading to its activation. Essential for activated phospho-MLKL to oligomerize and localize to the cell membrane during necroptosis. This Mus musculus (Mouse) protein is Inositol-tetrakisphosphate 1-kinase.